A 46-amino-acid chain; its full sequence is Homeobox protein Hox-D4 (46 aa).

A DNA-binding region (homeobox) is located at residues 1–46 (VNSNYTGGEPKRSRTAYTRQQVLELEKEFLFNRYLTRRRRIQHTLT).

Belongs to the Antp homeobox family. Deformed subfamily. Forms a DNA-binding heterodimer with transcription factor PBX1.

Its subcellular location is the nucleus. Its function is as follows. Sequence-specific transcription factor which is part of a developmental regulatory system that provides cells with specific positional identities on the anterior-posterior axis. This is Homeobox protein Hox-D4 (HOXD4) from Ovis aries (Sheep).